Reading from the N-terminus, the 430-residue chain is UDP-N-acetylglucosamine 1-carboxyvinyltransferase (430 aa).

Lys22 to Asn23 serves as a coordination point for phosphoenolpyruvate. Position 102 (Arg102) interacts with UDP-N-acetyl-alpha-D-glucosamine. The Proton donor role is filled by Cys126. The residue at position 126 (Cys126) is a 2-(S-cysteinyl)pyruvic acid O-phosphothioketal. Residues Arg131 to Leu135, Lys172 to Val175, Asp317, and Ile339 each bind UDP-N-acetyl-alpha-D-glucosamine.

Belongs to the EPSP synthase family. MurA subfamily.

The protein resides in the cytoplasm. The catalysed reaction is phosphoenolpyruvate + UDP-N-acetyl-alpha-D-glucosamine = UDP-N-acetyl-3-O-(1-carboxyvinyl)-alpha-D-glucosamine + phosphate. It functions in the pathway cell wall biogenesis; peptidoglycan biosynthesis. Its function is as follows. Cell wall formation. Adds enolpyruvyl to UDP-N-acetylglucosamine. The protein is UDP-N-acetylglucosamine 1-carboxyvinyltransferase of Rhizobium etli (strain CIAT 652).